We begin with the raw amino-acid sequence, 429 residues long: MRVLIIGSGGREHALGWKAAQNPNVETIFIAPGNAGTALEPKLENVNIDVEDIAGLVAFAKEKAIELTIVGPEAPLVIGVVDAFREAGLPIFGPTQAAAQLEGSKAFTKDFLARHQIPTGAYANFTEIEPALAYVREQGAPIVVKADGLAAGKGVIVAMTLEEAEDAIKDMLAGNAFGDAGSRVVIEEFLDGEEASFIVMVDGENVLPMATSQDHKRVGDKDTGPNTGGMGAYSPAPVVTPEIHNRIMEEVIYPTVRGMASEGNPYTGFLYAGLMIDKDGTPKVIEYNCRFGDPETQPIMMRMESDLVDLCLAAIDEKLDQVESKWDPRASIGIVLAAGGYPAAYNKGDVISGLPQVEIEGEKVFHAGTDNQDGDIVTNGGRVLCATALGNSVSEAQQRAYELAKQISWDGMFHRNDIGYRAIAREQEK.

Residues 109–316 (KDFLARHQIP…LVDLCLAAID (208 aa)) enclose the ATP-grasp domain. Residue 135-196 (VREQGAPIVV…EEFLDGEEAS (62 aa)) participates in ATP binding. The segment at 212 to 235 (SQDHKRVGDKDTGPNTGGMGAYSP) is disordered. Residues 213 to 223 (QDHKRVGDKDT) show a composition bias toward basic and acidic residues. Mg(2+) contacts are provided by Glu286 and Asn288.

The protein belongs to the GARS family. Mg(2+) serves as cofactor. It depends on Mn(2+) as a cofactor.

It catalyses the reaction 5-phospho-beta-D-ribosylamine + glycine + ATP = N(1)-(5-phospho-beta-D-ribosyl)glycinamide + ADP + phosphate + H(+). The protein operates within purine metabolism; IMP biosynthesis via de novo pathway; N(1)-(5-phospho-D-ribosyl)glycinamide from 5-phospho-alpha-D-ribose 1-diphosphate: step 2/2. This is Phosphoribosylamine--glycine ligase from Vibrio parahaemolyticus serotype O3:K6 (strain RIMD 2210633).